We begin with the raw amino-acid sequence, 275 residues long: Ribosomal RNA small subunit methyltransferase A (275 aa).

Asn-28, Leu-30, Gly-55, Glu-77, Asp-103, and Asn-123 together coordinate S-adenosyl-L-methionine.

This sequence belongs to the class I-like SAM-binding methyltransferase superfamily. rRNA adenine N(6)-methyltransferase family. RsmA subfamily.

It localises to the cytoplasm. It carries out the reaction adenosine(1518)/adenosine(1519) in 16S rRNA + 4 S-adenosyl-L-methionine = N(6)-dimethyladenosine(1518)/N(6)-dimethyladenosine(1519) in 16S rRNA + 4 S-adenosyl-L-homocysteine + 4 H(+). In terms of biological role, specifically dimethylates two adjacent adenosines (A1518 and A1519) in the loop of a conserved hairpin near the 3'-end of 16S rRNA in the 30S particle. May play a critical role in biogenesis of 30S subunits. The sequence is that of Ribosomal RNA small subunit methyltransferase A from Rhizobium etli (strain ATCC 51251 / DSM 11541 / JCM 21823 / NBRC 15573 / CFN 42).